The following is a 572-amino-acid chain: Proline--tRNA ligase (572 aa).

It belongs to the class-II aminoacyl-tRNA synthetase family. ProS type 1 subfamily. As to quaternary structure, homodimer.

The protein localises to the cytoplasm. It catalyses the reaction tRNA(Pro) + L-proline + ATP = L-prolyl-tRNA(Pro) + AMP + diphosphate. Catalyzes the attachment of proline to tRNA(Pro) in a two-step reaction: proline is first activated by ATP to form Pro-AMP and then transferred to the acceptor end of tRNA(Pro). As ProRS can inadvertently accommodate and process non-cognate amino acids such as alanine and cysteine, to avoid such errors it has two additional distinct editing activities against alanine. One activity is designated as 'pretransfer' editing and involves the tRNA(Pro)-independent hydrolysis of activated Ala-AMP. The other activity is designated 'posttransfer' editing and involves deacylation of mischarged Ala-tRNA(Pro). The misacylated Cys-tRNA(Pro) is not edited by ProRS. This chain is Proline--tRNA ligase, found in Cronobacter sakazakii (strain ATCC BAA-894) (Enterobacter sakazakii).